Here is a 362-residue protein sequence, read N- to C-terminus: Aminomethyltransferase (362 aa).

This sequence belongs to the GcvT family. The glycine cleavage system is composed of four proteins: P, T, L and H.

It carries out the reaction N(6)-[(R)-S(8)-aminomethyldihydrolipoyl]-L-lysyl-[protein] + (6S)-5,6,7,8-tetrahydrofolate = N(6)-[(R)-dihydrolipoyl]-L-lysyl-[protein] + (6R)-5,10-methylene-5,6,7,8-tetrahydrofolate + NH4(+). Its function is as follows. The glycine cleavage system catalyzes the degradation of glycine. The chain is Aminomethyltransferase from Listeria monocytogenes serotype 4b (strain F2365).